The chain runs to 83 residues: Heterin-1 (83 aa).

Residues 1–22 form the signal peptide; it reads MNGKLLLVSLMVTMLVMQPAEA. Positions 66 to 83 are excised as a propeptide; sequence VAGQIPFDEFMDILHYRP.

This sequence belongs to the non-disulfide-bridged peptide (NDBP) superfamily. Long chain multifunctional peptide (group 2) family. As to expression, expressed by the venom gland.

The protein localises to the secreted. Its subcellular location is the target cell membrane. Its function is as follows. Amphipathic peptide with potent activities against both Gram-positive and Gram-negative bacteria. Is the most active against the two Gram-positive Bacillus megaterium and Micrococcus luteus (MIC=4.0 uM for both). It has relatively low hemolytic activity against human erythrocytes. This Heterometrus spinifer (Asia giant forest scorpion) protein is Heterin-1.